Here is a 65-residue protein sequence, read N- to C-terminus: Small ribosomal subunit protein bS21 (65 aa).

The protein belongs to the bacterial ribosomal protein bS21 family.

The protein is Small ribosomal subunit protein bS21 of Geobacter sp. (strain M21).